We begin with the raw amino-acid sequence, 718 residues long: Sec-independent protein translocase protein TatCt (718 aa).

Helical transmembrane passes span 34–54 (VFIVFLVGFLGTFYALRLYVW), 84–104 (ILLQAKIGLVVGVLFALPPFI), 137–157 (LFAAGVAYGYFVFFPFTFAFL), 178–198 (FIFLLTLSFGLASQLPLAMTG), 214–231 (WRHAIVGIFAFGALFTPP), 234–254 (FTQIMWAVPVILLYAFSLYLA), 280–300 (LAGVGVVVGLLVYAFYEYGGV), and 325–345 (LGAFVVAGGFVGLAFGLAYLV). A disordered region spans residues 421–451 (REAEAADAEDEPGELEDRTTRAGGAFVSELT). Positions 425-434 (AADAEDEPGE) are enriched in acidic residues. 6 helical membrane passes run 478-498 (AFWVVGWFMLVLATTFGWLYT), 539-559 (FSTILAVLATLPLVAYFVWPA), 572-592 (TVFVWTGALAGGLLGGFALGY), 621-641 (FFWLIFFTTAGIGLLADVPIL), 661-681 (EVTVFILAISAVFTPASITTM), and 682-702 (FMVTLPLMAAYGVGLGVLFVL).

The protein belongs to the TatC family. As to quaternary structure, forms a complex with TatA.

It is found in the cell membrane. Part of the twin-arginine translocation (Tat) system that transports large folded proteins containing a characteristic twin-arginine motif in their signal peptide across membranes. This Haloferax volcanii (strain ATCC 29605 / DSM 3757 / JCM 8879 / NBRC 14742 / NCIMB 2012 / VKM B-1768 / DS2) (Halobacterium volcanii) protein is Sec-independent protein translocase protein TatCt.